Here is a 369-residue protein sequence, read N- to C-terminus: Fructose-bisphosphate aldolase 2 (369 aa).

Residue Asp40 participates in dihydroxyacetone phosphate binding. Residues Ser42 and Thr45 each contribute to the D-glyceraldehyde 3-phosphate site. Residue Arg49 participates in beta-D-fructose 1,6-bisphosphate binding. Lys113 contacts D-glyceraldehyde 3-phosphate. Lys152 provides a ligand contact to dihydroxyacetone phosphate. Glu195 is a binding site for D-glyceraldehyde 3-phosphate. Glu195 acts as the Proton acceptor in catalysis. Dihydroxyacetone phosphate-binding residues include Lys237, Ser279, and Gly280. Residue Lys237 is the Schiff-base intermediate with dihydroxyacetone phosphate of the active site. Beta-D-fructose 1,6-bisphosphate is bound by residues 279-281 and Ser307; that span reads SGG. Dihydroxyacetone phosphate-binding residues include Gly309 and Arg310. Arg310 provides a ligand contact to beta-D-fructose 1,6-bisphosphate.

It belongs to the class I fructose-bisphosphate aldolase family.

Its subcellular location is the cytoplasm. The protein resides in the membrane. It is found in the host cell membrane. It catalyses the reaction beta-D-fructose 1,6-bisphosphate = D-glyceraldehyde 3-phosphate + dihydroxyacetone phosphate. It functions in the pathway carbohydrate degradation; glycolysis; D-glyceraldehyde 3-phosphate and glycerone phosphate from D-glucose: step 4/4. In terms of biological role, plays a key role in glycolysis by catalyzing the cleavage of fructose 1,6-bisphosphate into dihydroxyacetone phosphate and glyceraldehyde 3-phosphate. In Plasmodium berghei (strain Anka), this protein is Fructose-bisphosphate aldolase 2 (ALDO2).